We begin with the raw amino-acid sequence, 256 residues long: UPF0259 membrane protein YPO2199/y2042/YP_1997 (256 aa).

6 helical membrane-spanning segments follow: residues 20-40, 90-110, 118-138, 141-161, 192-212, and 221-241; these read IAAI…LNQT, FSAL…IAMV, ALQA…LMFI, LVIQ…AIAL, LIVP…FLIS, and IATI…LVYL.

The protein belongs to the UPF0259 family.

The protein localises to the cell inner membrane. The protein is UPF0259 membrane protein YPO2199/y2042/YP_1997 of Yersinia pestis.